The following is a 420-amino-acid chain: 2,3-dimethylmalate dehydratase large subunit (420 aa).

[4Fe-4S] cluster is bound by residues C301, C361, and C364.

The protein belongs to the aconitase/IPM isomerase family. LeuC type 2 subfamily. As to quaternary structure, heterodimer of a large and a small subunit. [4Fe-4S] cluster serves as cofactor.

The catalysed reaction is (2R,3S)-2,3-dimethylmalate = dimethylmaleate + H2O. Its pathway is cofactor degradation; nicotinate degradation; propanoate and pyruvate from 6-hydroxynicotinate: step 7/8. This Eubacterium barkeri (Clostridium barkeri) protein is 2,3-dimethylmalate dehydratase large subunit (dmdA).